The sequence spans 210 residues: Na(+)-translocating NADH-quinone reductase subunit D (210 aa).

A run of 6 helical transmembrane segments spans residues 9–29, 42–62, 72–92, 96–116, 131–151, and 178–198; these read AVLF…LGIC, LIMS…ISTI, IIVQ…VLQA, ATAK…IVMG, FLDG…VGFI, and MGLL…IWVL.

Belongs to the NqrDE/RnfAE family. As to quaternary structure, composed of six subunits; NqrA, NqrB, NqrC, NqrD, NqrE and NqrF.

It localises to the cell inner membrane. The catalysed reaction is a ubiquinone + n Na(+)(in) + NADH + H(+) = a ubiquinol + n Na(+)(out) + NAD(+). NQR complex catalyzes the reduction of ubiquinone-1 to ubiquinol by two successive reactions, coupled with the transport of Na(+) ions from the cytoplasm to the periplasm. NqrA to NqrE are probably involved in the second step, the conversion of ubisemiquinone to ubiquinol. This chain is Na(+)-translocating NADH-quinone reductase subunit D, found in Pseudoalteromonas translucida (strain TAC 125).